The following is a 311-amino-acid chain: tRNA-cytidine(32) 2-sulfurtransferase (311 aa).

The PP-loop motif signature appears at 58 to 63; the sequence is SGGKDS. [4Fe-4S] cluster is bound by residues Cys133, Cys136, and Cys224.

This sequence belongs to the TtcA family. In terms of assembly, homodimer. Mg(2+) serves as cofactor. It depends on [4Fe-4S] cluster as a cofactor.

The protein resides in the cytoplasm. The catalysed reaction is cytidine(32) in tRNA + S-sulfanyl-L-cysteinyl-[cysteine desulfurase] + AH2 + ATP = 2-thiocytidine(32) in tRNA + L-cysteinyl-[cysteine desulfurase] + A + AMP + diphosphate + H(+). Its pathway is tRNA modification. Catalyzes the ATP-dependent 2-thiolation of cytidine in position 32 of tRNA, to form 2-thiocytidine (s(2)C32). The sulfur atoms are provided by the cysteine/cysteine desulfurase (IscS) system. In Polaromonas sp. (strain JS666 / ATCC BAA-500), this protein is tRNA-cytidine(32) 2-sulfurtransferase.